Reading from the N-terminus, the 221-residue chain is N-(5'-phosphoribosyl)anthranilate isomerase (221 aa).

Belongs to the TrpF family.

The enzyme catalyses N-(5-phospho-beta-D-ribosyl)anthranilate = 1-(2-carboxyphenylamino)-1-deoxy-D-ribulose 5-phosphate. It functions in the pathway amino-acid biosynthesis; L-tryptophan biosynthesis; L-tryptophan from chorismate: step 3/5. In Chlorobaculum parvum (strain DSM 263 / NCIMB 8327) (Chlorobium vibrioforme subsp. thiosulfatophilum), this protein is N-(5'-phosphoribosyl)anthranilate isomerase.